The primary structure comprises 318 residues: GPN-loop GTPase 2 (318 aa).

29–34 (GSGKST) contacts GTP. Residues 85 to 87 (GPN) carry the Gly-Pro-Asn (GPN)-loop; involved in dimer interface motif. 187–190 (SKMD) is a binding site for GTP.

The protein belongs to the GPN-loop GTPase family. As to quaternary structure, heterodimers with gpn1 or gpn3. Binds to RNA polymerase II (RNAPII).

Its function is as follows. Small GTPase required for proper localization of RNA polymerase II and III (RNAPII and RNAPIII). May act at an RNAP assembly step prior to nuclear import. This Xenopus laevis (African clawed frog) protein is GPN-loop GTPase 2.